The following is a 164-amino-acid chain: Sperm axonemal maintenance protein CFAP97D1 (164 aa).

The stretch at 61-88 (LSKIQGEQKRIDKIEYENRQLCQKIANA) forms a coiled coil.

This sequence belongs to the CFAP97 family. Expressed exclusively in testis.

In terms of biological role, required for male fertility through its role in axonemal doublet stabilization which is essential for sperm motility and fertilization. This chain is Sperm axonemal maintenance protein CFAP97D1 (Cfap97d1), found in Mus musculus (Mouse).